A 444-amino-acid chain; its full sequence is Exodeoxyribonuclease 7 large subunit (444 aa).

This sequence belongs to the XseA family. In terms of assembly, heterooligomer composed of large and small subunits.

It localises to the cytoplasm. It catalyses the reaction Exonucleolytic cleavage in either 5'- to 3'- or 3'- to 5'-direction to yield nucleoside 5'-phosphates.. Functionally, bidirectionally degrades single-stranded DNA into large acid-insoluble oligonucleotides, which are then degraded further into small acid-soluble oligonucleotides. The polypeptide is Exodeoxyribonuclease 7 large subunit (Xylella fastidiosa (strain 9a5c)).